The primary structure comprises 172 residues: MSQQQQFKYIVRLFGQDVDGTMKVPYALAMVKGIGYNTARAIVFKLGLDKDRRLGELSDEDIKKIENYLTDKKILEVPNWMYNRRKDYESGIDMHLVTSDLIFYVRNDIEREKKIKSWRGVRHSLGLKVRGQRTRTTGRTGVTVGVRRSKAAQAAQQQQKAQASSGGEKKQG.

The segment at 131–172 (GQRTRTTGRTGVTVGVRRSKAAQAAQQQQKAQASSGGEKKQG) is disordered. Over residues 134–163 (TRTTGRTGVTVGVRRSKAAQAAQQQQKAQA) the composition is skewed to low complexity.

This sequence belongs to the universal ribosomal protein uS13 family. Part of the 30S ribosomal subunit. Forms a loose heterodimer with protein S19. Forms two bridges to the 50S subunit in the 70S ribosome.

In terms of biological role, located at the top of the head of the 30S subunit, it contacts several helices of the 16S rRNA. In the 70S ribosome it contacts the 23S rRNA (bridge B1a) and protein L5 of the 50S subunit (bridge B1b), connecting the 2 subunits; these bridges are implicated in subunit movement. This is Small ribosomal subunit protein uS13 from Sulfurisphaera tokodaii (strain DSM 16993 / JCM 10545 / NBRC 100140 / 7) (Sulfolobus tokodaii).